We begin with the raw amino-acid sequence, 273 residues long: Putative pyruvate, phosphate dikinase regulatory protein (273 aa).

Gly149 to Thr156 contacts ADP.

It belongs to the pyruvate, phosphate/water dikinase regulatory protein family. PDRP subfamily.

The enzyme catalyses N(tele)-phospho-L-histidyl/L-threonyl-[pyruvate, phosphate dikinase] + ADP = N(tele)-phospho-L-histidyl/O-phospho-L-threonyl-[pyruvate, phosphate dikinase] + AMP + H(+). It carries out the reaction N(tele)-phospho-L-histidyl/O-phospho-L-threonyl-[pyruvate, phosphate dikinase] + phosphate + H(+) = N(tele)-phospho-L-histidyl/L-threonyl-[pyruvate, phosphate dikinase] + diphosphate. Its function is as follows. Bifunctional serine/threonine kinase and phosphorylase involved in the regulation of the pyruvate, phosphate dikinase (PPDK) by catalyzing its phosphorylation/dephosphorylation. The chain is Putative pyruvate, phosphate dikinase regulatory protein from Rickettsia bellii (strain RML369-C).